A 405-amino-acid polypeptide reads, in one-letter code: MPEPVAEPALNGLRLNLRIVSIVMFNFASYLTIGLPLAVLPGYVHDAMGFSAFWAGLIISLQYFATLLSRPHAGRYADVLGPKKIVVFGLCGCFLSGFGYLLADIASAWPMISLLLLGLGRVILGIGQSFAGTGSTLWGVGVVGSLHIGRVISWNGIVTYGAMAMGAPLGVLCYAWGGLQGLALTVMGVALLAILLALPRPSVKANKGKPLPFRAVLGRVWLYGMALALASAGFGVIATFITLFYDAKGWDGAAFALTLFSVAFVGTRLLFPNGINRLGGLNVAMICFGVEIIGLLLVGTAAMPWMAKIGVLLTGMGFSLVFPALGVVAVKAVPPQNQGAALATYTVFMDMSLGVTGPLAGLVMTWAGVPVIYLAAAGLVAMALLLTWRLKKRPPSALPEAASSS.

Helical transmembrane passes span 19–39 (IVSI…PLAV), 48–68 (MGFS…ATLL), 85–105 (IVVF…LADI), 106–126 (ASAW…ILGI), 129–149 (SFAG…LHIG), 156–176 (GIVT…CYAW), 178–198 (GLQG…LLAL), 224–244 (GMAL…ITLF), 252–272 (GAAF…LLFP), 283–303 (VAMI…TAAM), 309–329 (IGVL…GVVA), 344–364 (TYTV…GLVM), and 366–386 (WAGV…ALLL).

Belongs to the major facilitator superfamily. YhhS family.

The protein resides in the cell inner membrane. This is an uncharacterized protein from Salmonella paratyphi C (strain RKS4594).